Reading from the N-terminus, the 974-residue chain is MASNNVAQFAAELKMPAGVLLEQLQAAGVQKASEDDALSETDKARLLDHLRKSHGATDGDKRKITLTRKHTSEIKQSDATGKARTIQVEVRKKRTFVKRDDVAEGAEQGQAQVAEADDDAELKRREEEARREAELLEQQAQELLERQERLEREEAERRAREEAAEAERRRAEEEAAAKRAAAEAAAAQQAAAQQAAEAKQEAPGAQSAQEEARAAAERAAQREAAKKAEDAAREAADKARAEQEEIRKRREAAEAEARAIREMMNTPRKAVVKAVEPPKPVEAPKPAEAKGTLHKPAKPAGAGVQARPAVKKPAGATPATTQAPAAGAGDRNKKPGGGKGGWQDDAAKRRGIKTRGDSSGGVDRGWRGGPKGRGRHQDSASTFQAPTEPIVREVHVPETISVADLAHKMSIKASEVIKVMMKMGQMVTINQVLDQETAMIVVEELGHRAVAAKLDDPEALLVEGETSSDAEQLPRPPVVTVMGHVDHGKTSLLDHIRRAKVAAGEAGGITQHIGAYHVETPRGVITFLDTPGHEAFTAMRARGAKATDIVVLVVAADDGVMPQTKEAIAHAKAGGVPIVVAINKIDKPEANPDRVKQELVAEGVVPEEYGGDSPFVPVSAKTGAGIDDLLENVLLQAEVLELKAPVEAPAKGIVIEAKLDKGKGPVATILVQSGTLNRGDIVLAGSAYGRVRAMLDENGKPTKEAGPSIPVEIQGLSEVPGAGEEVIVLPDERKAREIALFRQGKFRDVKLAKQQAAKLESMLEQMGEGEVQNLPLIIKADVQGSQEALVQSLLKLSTDEVRVQIVHSAVGGISENDVNLATASKAVIIGFNTRADAQARKLAEANGIDIRYYNIIYDAVDEVKAAMSGMLAPEKREVITGMVEVRQVFKVPKIGTVAGCMVTDGIVKRSSSVRVLRNNVVIFTGELESLKRFKDDVKEVKQGFECGMSVKNFNDIVEGDQFEVFEVTEVARTL.

3 disordered regions span residues 67 to 86 (TRKH…ARTI), 101 to 133 (DVAE…RREA), and 146 to 385 (RQER…TFQA). The segment covering 105 to 114 (GAEQGQAQVA) has biased composition (low complexity). 2 stretches are compositionally biased toward basic and acidic residues: residues 121-133 (ELKR…RREA) and 146-181 (RQER…KRAA). The segment covering 182 to 197 (AEAAAAQQAAAQQAAE) has biased composition (low complexity). The segment covering 210–261 (EEARAAAERAAQREAAKKAEDAAREAADKARAEQEEIRKRREAAEAEARAIR) has biased composition (basic and acidic residues). A compositionally biased stretch (low complexity) spans 313-329 (PAGATPATTQAPAAGAG). Over residues 358–371 (SSGGVDRGWRGGPK) the composition is skewed to gly residues. The region spanning 474–643 (PRPPVVTVMG…LLQAEVLELK (170 aa)) is the tr-type G domain. The G1 stretch occupies residues 483–490 (GHVDHGKT). 483–490 (GHVDHGKT) is a GTP binding site. The interval 508-512 (GITQH) is G2. Positions 529–532 (DTPG) are G3. GTP is bound by residues 529-533 (DTPGH) and 583-586 (NKID). Residues 583–586 (NKID) form a G4 region. The G5 stretch occupies residues 619 to 621 (SAK).

This sequence belongs to the TRAFAC class translation factor GTPase superfamily. Classic translation factor GTPase family. IF-2 subfamily.

It is found in the cytoplasm. In terms of biological role, one of the essential components for the initiation of protein synthesis. Protects formylmethionyl-tRNA from spontaneous hydrolysis and promotes its binding to the 30S ribosomal subunits. Also involved in the hydrolysis of GTP during the formation of the 70S ribosomal complex. In Burkholderia vietnamiensis (strain G4 / LMG 22486) (Burkholderia cepacia (strain R1808)), this protein is Translation initiation factor IF-2.